We begin with the raw amino-acid sequence, 170 residues long: Adenine phosphoribosyltransferase (170 aa).

It belongs to the purine/pyrimidine phosphoribosyltransferase family. As to quaternary structure, homodimer.

Its subcellular location is the cytoplasm. It catalyses the reaction AMP + diphosphate = 5-phospho-alpha-D-ribose 1-diphosphate + adenine. It functions in the pathway purine metabolism; AMP biosynthesis via salvage pathway; AMP from adenine: step 1/1. Functionally, catalyzes a salvage reaction resulting in the formation of AMP, that is energically less costly than de novo synthesis. This is Adenine phosphoribosyltransferase from Prochlorococcus marinus (strain MIT 9312).